A 282-amino-acid chain; its full sequence is Structure-specific endonuclease subunit slx1 (282 aa).

Positions 7–97 (GFYGVYLLFC…RLTHVPRKTK (91 aa)) constitute a GIY-YIG domain. The segment at 191-243 (CRVCYERVQDKDDSLHCFHPGCTLTAHIMCLAKLFLLNEPQNLIPVEGLCPSC) adopts an SLX1-type zinc-finger fold.

Belongs to the SLX1 family. In terms of assembly, forms a heterodimer with slx4. Requires a divalent metal cation as cofactor.

The protein resides in the nucleus. Functionally, catalytic subunit of the slx1-slx4 structure-specific endonuclease that resolves DNA secondary structures generated during DNA repair and recombination. Has endonuclease activity towards branched DNA substrates, introducing single-strand cuts in duplex DNA close to junctions with ss-DNA. This chain is Structure-specific endonuclease subunit slx1 (slx1a), found in Xenopus laevis (African clawed frog).